Reading from the N-terminus, the 48-residue chain is Osteocalcin (48 aa).

A Gla domain is found at 1–46; that stretch reads SFAVGSSYGAAPDPLEAQREVCELNPDCDELADHIGFQEAYRRFYG. Ca(2+)-binding residues include E16, E20, E23, and D29. E16, E20, and E23 each carry 4-carboxyglutamate. Residues C22 and C28 are joined by a disulfide bond.

The protein belongs to the osteocalcin/matrix Gla protein family. In terms of processing, gamma-carboxyglutamate residues are formed by vitamin K dependent carboxylation by GGCX. These residues are essential for the binding of calcium.

Its subcellular location is the secreted. The carboxylated form is one of the main organic components of the bone matrix, which constitutes 1-2% of the total bone protein. The carboxylated form binds strongly to apatite and calcium. This chain is Osteocalcin (BGLAP), found in Dromaius novaehollandiae (Emu).